Consider the following 297-residue polypeptide: Homoserine kinase (297 aa).

Pro-82–Ala-92 serves as a coordination point for ATP.

The protein belongs to the GHMP kinase family. Homoserine kinase subfamily.

The protein resides in the cytoplasm. It catalyses the reaction L-homoserine + ATP = O-phospho-L-homoserine + ADP + H(+). It participates in amino-acid biosynthesis; L-threonine biosynthesis; L-threonine from L-aspartate: step 4/5. Catalyzes the ATP-dependent phosphorylation of L-homoserine to L-homoserine phosphate. This chain is Homoserine kinase, found in Clostridium botulinum (strain 657 / Type Ba4).